Reading from the N-terminus, the 198-residue chain is Recombination protein RecR (198 aa).

The C4-type zinc finger occupies 57-72 (CSVCGRLTDDDPCSIC). Residues 80–175 (TTILVLEDSR…KVTRLARGLA (96 aa)) enclose the Toprim domain.

This sequence belongs to the RecR family.

May play a role in DNA repair. It seems to be involved in an RecBC-independent recombinational process of DNA repair. It may act with RecF and RecO. The chain is Recombination protein RecR from Streptococcus pneumoniae (strain Hungary19A-6).